The chain runs to 340 residues: L-lysine 2,3-aminomutase (340 aa).

Positions 106 to 321 (RKYNNRILLL…SMISGFLVPK (216 aa)) constitute a Radical SAM core domain. Cysteine 120, cysteine 124, and cysteine 127 together coordinate [4Fe-4S] cluster. Lysine 332 carries the N6-(pyridoxal phosphate)lysine modification.

The protein belongs to the radical SAM superfamily. KamA family. [4Fe-4S] cluster serves as cofactor. It depends on pyridoxal 5'-phosphate as a cofactor.

The enzyme catalyses L-lysine = D-beta-lysine. With EpmA is involved in the beta-lysylation step of the post-translational modification of translation elongation factor P (EF-P) on 'Lys-34'. EpmB appears to act before EpmA. Displays lysine 2,3-aminomutase activity, producing (R)-beta-lysine from (S)-alpha-lysine (L-lysine). This chain is L-lysine 2,3-aminomutase (epmB), found in Buchnera aphidicola subsp. Baizongia pistaciae (strain Bp).